A 525-amino-acid chain; its full sequence is Mitoguardin (525 aa).

The chain crosses the membrane as a helical span at residues 26–45; the sequence is VVLFSLTAGVALMSVLSRFL. The span at 47-67 shows a compositional bias: basic residues; that stretch reads RRKPPRPPRRARKYTGRRNRN. 2 disordered regions span residues 47 to 73 and 210 to 239; these read RRKP…RSPN and DEAE…GSDP. The segment covering 211–220 has biased composition (acidic residues); the sequence is EAEEEAGEAD.

The protein belongs to the mitoguardin family. Interacts with zuc.

Its subcellular location is the mitochondrion outer membrane. Regulator of mitochondrial fusion required to maintain neuronal homeostasis. The protein is Mitoguardin of Drosophila melanogaster (Fruit fly).